The sequence spans 295 residues: 33 kDa chaperonin (295 aa).

Disulfide bonds link C236–C238 and C269–C272.

Belongs to the HSP33 family. Post-translationally, under oxidizing conditions two disulfide bonds are formed involving the reactive cysteines. Under reducing conditions zinc is bound to the reactive cysteines and the protein is inactive.

Its subcellular location is the cytoplasm. In terms of biological role, redox regulated molecular chaperone. Protects both thermally unfolding and oxidatively damaged proteins from irreversible aggregation. Plays an important role in the bacterial defense system toward oxidative stress. This chain is 33 kDa chaperonin, found in Citrifermentans bemidjiense (strain ATCC BAA-1014 / DSM 16622 / JCM 12645 / Bem) (Geobacter bemidjiensis).